Reading from the N-terminus, the 257-residue chain is Transcription factor MYB4 (257 aa).

HTH myb-type domains are found at residues 9 to 61 and 62 to 116; these read KMGL…INYL and RPDI…KKRL. DNA-binding regions (H-T-H motif) lie at residues 37-61 and 89-112; these read WRAL…INYL and WSAI…HTHL. The disordered stretch occupies residues 115-179; sequence RLDAPAQGGH…VAEEHGNAGI (65 aa). The span at 130-140 shows a compositional bias: basic residues; the sequence is GKKHKKPKSAK. Positions 141–170 are enriched in low complexity; it reads KPAAAAAAPPASPERSASSSVTESSMASSV.

It is found in the nucleus. Functionally, transcriptional activator involved in cold stress response. Regulates positively the expression of genes involved in reactive oxygen species (ROS) scavenging such as peroxidase and superoxide dismutase during cold stress. Transactivates a complex gene network that have major effects on stress tolerance and panicle development. In Oryza sativa subsp. japonica (Rice), this protein is Transcription factor MYB4.